We begin with the raw amino-acid sequence, 457 residues long: Multidrug resistance protein MdtK (457 aa).

The next 12 membrane-spanning stretches (helical) occupy residues 11–31 (LLALAIPVILAQVAQTAMGFV), 53–73 (IWLPAILFGHGLLLALTPVVA), 93–113 (WLAGFVSVLIMVVLWNAGYII), 127–147 (AVGYLRALLWGAPGYLFFQVA), 160–180 (GMVMGFIGLLVNIPVNYIFIY), 191–211 (VGCGVATASVYWVMFASMLWW), 243–263 (LPIALALFFEVTLFAVVALLV), 276–296 (IALNFSSLMFVLPLSLAAAVT), 316–336 (RTGVGVGVCLAVFTAIFTVLM), 350–370 (VVLLASHLMLLAAIYQISDSI), 387–407 (IFFITFTAYWVLGLPSGYLLA), and 418–438 (PAGFWCGFIIGLTSAAIMMML).

Belongs to the multi antimicrobial extrusion (MATE) (TC 2.A.66.1) family. MdtK subfamily.

It is found in the cell inner membrane. Functionally, multidrug efflux pump that functions probably as a Na(+)/drug antiporter. In Klebsiella pneumoniae (strain 342), this protein is Multidrug resistance protein MdtK.